A 202-amino-acid chain; its full sequence is Protein-methionine-sulfoxide reductase heme-binding subunit MsrQ (202 aa).

A run of 6 helical transmembrane segments spans residues 8–28 (YAWL…FLLW), 50–70 (LALI…WLGW), 76–96 (IRKA…GIYL), 114–134 (PFIT…LTSG), 148–168 (LLHR…WWGV), and 174–194 (GPLL…KTPA).

The protein belongs to the MsrQ family. In terms of assembly, heterodimer of a catalytic subunit (MsrP) and a heme-binding subunit (MsrQ). FMN is required as a cofactor. The cofactor is heme b.

It localises to the cell membrane. Functionally, part of the MsrPQ system that repairs oxidized cell envelope proteins containing methionine sulfoxide residues (Met-O), using respiratory chain electrons. Thus protects these proteins from oxidative-stress damage caused by reactive species of oxygen and chlorine. MsrPQ is essential for the maintenance of envelope integrity under bleach stress, rescuing a wide series of structurally unrelated cell envelope proteins from methionine oxidation. MsrQ provides electrons for reduction to the reductase catalytic subunit MsrP, using the quinone pool of the respiratory chain. The sequence is that of Protein-methionine-sulfoxide reductase heme-binding subunit MsrQ from Deinococcus radiodurans (strain ATCC 13939 / DSM 20539 / JCM 16871 / CCUG 27074 / LMG 4051 / NBRC 15346 / NCIMB 9279 / VKM B-1422 / R1).